A 488-amino-acid chain; its full sequence is UDP-N-acetylmuramate--L-alanine ligase (488 aa).

129-135 (GTHGKTT) contributes to the ATP binding site.

This sequence belongs to the MurCDEF family.

The protein resides in the cytoplasm. It carries out the reaction UDP-N-acetyl-alpha-D-muramate + L-alanine + ATP = UDP-N-acetyl-alpha-D-muramoyl-L-alanine + ADP + phosphate + H(+). It participates in cell wall biogenesis; peptidoglycan biosynthesis. In terms of biological role, cell wall formation. This is UDP-N-acetylmuramate--L-alanine ligase from Chromohalobacter salexigens (strain ATCC BAA-138 / DSM 3043 / CIP 106854 / NCIMB 13768 / 1H11).